We begin with the raw amino-acid sequence, 101 residues long: Urease subunit beta (101 aa).

The protein belongs to the urease beta subunit family. In terms of assembly, heterotrimer of UreA (gamma), UreB (beta) and UreC (alpha) subunits. Three heterotrimers associate to form the active enzyme.

The protein resides in the cytoplasm. It carries out the reaction urea + 2 H2O + H(+) = hydrogencarbonate + 2 NH4(+). Its pathway is nitrogen metabolism; urea degradation; CO(2) and NH(3) from urea (urease route): step 1/1. This Albidiferax ferrireducens (strain ATCC BAA-621 / DSM 15236 / T118) (Rhodoferax ferrireducens) protein is Urease subunit beta.